A 268-amino-acid chain; its full sequence is 3-methyl-2-oxobutanoate hydroxymethyltransferase (268 aa).

Mg(2+)-binding residues include aspartate 44 and aspartate 83. Residues 44-45 (DS), aspartate 83, and lysine 113 contribute to the 3-methyl-2-oxobutanoate site. Glutamate 115 provides a ligand contact to Mg(2+). Glutamate 182 serves as the catalytic Proton acceptor.

This sequence belongs to the PanB family. In terms of assembly, homodecamer; pentamer of dimers. The cofactor is Mg(2+).

It is found in the cytoplasm. It catalyses the reaction 3-methyl-2-oxobutanoate + (6R)-5,10-methylene-5,6,7,8-tetrahydrofolate + H2O = 2-dehydropantoate + (6S)-5,6,7,8-tetrahydrofolate. The protein operates within cofactor biosynthesis; (R)-pantothenate biosynthesis; (R)-pantoate from 3-methyl-2-oxobutanoate: step 1/2. Catalyzes the reversible reaction in which hydroxymethyl group from 5,10-methylenetetrahydrofolate is transferred onto alpha-ketoisovalerate to form ketopantoate. This chain is 3-methyl-2-oxobutanoate hydroxymethyltransferase, found in Synechococcus elongatus (strain ATCC 33912 / PCC 7942 / FACHB-805) (Anacystis nidulans R2).